Consider the following 83-residue polypeptide: ATP synthase subunit c, chloroplastic (83 aa).

The next 2 helical transmembrane spans lie at 3 to 23 (PIIS…AAIG) and 57 to 77 (LAFM…LLFA).

The protein belongs to the ATPase C chain family. As to quaternary structure, F-type ATPases have 2 components, F(1) - the catalytic core - and F(0) - the membrane proton channel. F(1) has five subunits: alpha(3), beta(3), gamma(1), delta(1), epsilon(1). F(0) has four main subunits: a(1), b(1), b'(1) and c(10-14). The alpha and beta chains form an alternating ring which encloses part of the gamma chain. F(1) is attached to F(0) by a central stalk formed by the gamma and epsilon chains, while a peripheral stalk is formed by the delta, b and b' chains.

It is found in the plastid. Its subcellular location is the chloroplast thylakoid membrane. Its function is as follows. F(1)F(0) ATP synthase produces ATP from ADP in the presence of a proton or sodium gradient. F-type ATPases consist of two structural domains, F(1) containing the extramembraneous catalytic core and F(0) containing the membrane proton channel, linked together by a central stalk and a peripheral stalk. During catalysis, ATP synthesis in the catalytic domain of F(1) is coupled via a rotary mechanism of the central stalk subunits to proton translocation. Functionally, key component of the F(0) channel; it plays a direct role in translocation across the membrane. A homomeric c-ring of between 10-14 subunits forms the central stalk rotor element with the F(1) delta and epsilon subunits. The sequence is that of ATP synthase subunit c, chloroplastic from Diacronema lutheri (Unicellular marine alga).